Consider the following 401-residue polypeptide: Calreticulin (401 aa).

The N-terminal stretch at 1–18 is a signal peptide; the sequence is MRKELWLGLLLSSQAVLS. Cys103 and Cys134 are oxidised to a cystine. The an alpha-D-glucoside site is built by Tyr107, Lys109, Tyr125, and Asp132. Tandem repeats lie at residues 187–198, 206–217, 223–234, 241–252, 256–266, 270–280, and 284–294. Residues 187-252 are 4 X approximate repeats; the sequence is KESGTLEEDW…DATQPDDWDE (66 aa). 2 stretches are compositionally biased toward basic and acidic residues: residues 199–214 and 224–236; these read LKPKTIPDPEDKKPAD and PEDKKPEDWDKEP. Residues 199-263 form a disordered region; it reads LKPKTIPDPE…EDGKWEAPMI (65 aa). The segment covering 246 to 256 has biased composition (acidic residues); sequence QPDDWDEEEDG. The tract at residues 256 to 294 is 3 X approximate repeats; the sequence is GKWEAPMISNPKYKGEWKAKKIPNPAYKGVWKPRDIPNP. An an alpha-D-glucoside-binding site is contributed by Asp314. The disordered stretch occupies residues 341–401; sequence DQTNGATKDA…EEEDDKKDEL (61 aa). Residues 348–381 show a composition bias toward basic and acidic residues; it reads KDAEKKAFDSAEADKRKKEEDERKKQEEEEKKTA. Over residues 382–401 the composition is skewed to acidic residues; sequence EEDEDDDDEEEEEDDKKDEL. The Prevents secretion from ER motif lies at 398 to 401; it reads KDEL.

This sequence belongs to the calreticulin family.

It localises to the endoplasmic reticulum lumen. Functionally, molecular calcium-binding chaperone promoting folding, oligomeric assembly and quality control in the ER via the calreticulin/calnexin cycle. This lectin may interact transiently with almost all of the monoglucosylated glycoproteins that are synthesized in the ER. The chain is Calreticulin from Euglena gracilis.